We begin with the raw amino-acid sequence, 164 residues long: Arginine repressor (164 aa).

Belongs to the ArgR family.

The protein localises to the cytoplasm. It participates in amino-acid biosynthesis; L-arginine biosynthesis [regulation]. Regulates arginine biosynthesis genes. The sequence is that of Arginine repressor from Thermus thermophilus (strain ATCC BAA-163 / DSM 7039 / HB27).